An 84-amino-acid polypeptide reads, in one-letter code: ICP35 (84 aa).

The protein is ICP35 of Crustacea (WSSV).